Consider the following 375-residue polypeptide: Putative actin-26 (375 aa).

This sequence belongs to the actin family.

The protein resides in the cytoplasm. Its subcellular location is the cytoskeleton. It catalyses the reaction ATP + H2O = ADP + phosphate + H(+). Its function is as follows. Actins are highly conserved proteins that are involved in various types of cell motility and are ubiquitously expressed in all eukaryotic cells. Multiple isoforms are involved in various cellular functions such as cytoskeleton structure, cell mobility, chromosome movement and muscle contraction. This Dictyostelium discoideum (Social amoeba) protein is Putative actin-26 (act26).